The sequence spans 525 residues: Delta(24)-sterol reductase homolog dhcr-24 (525 aa).

A run of 2 helical transmembrane segments spans residues 27–47 (WVFVVPFLLPLSFLFNTVFDF) and 214–234 (SLFFAIPWSQGTICFLVAATI). Positions 47-239 (FRNRIVHAVN…VAATIKIIPC (193 aa)) constitute an FAD-binding PCMH-type domain.

This sequence belongs to the FAD-binding oxidoreductase/transferase type 4 family. FAD is required as a cofactor.

It is found in the endoplasmic reticulum membrane. It localises to the golgi apparatus membrane. The enzyme catalyses cholesterol + NADP(+) = desmosterol + NADPH + H(+). It carries out the reaction lanosterol + NADPH + H(+) = 24,25-dihydrolanosterol + NADP(+). It catalyses the reaction 5alpha-cholest-8-en-3beta-ol + NADP(+) = zymosterol + NADPH + H(+). It participates in steroid biosynthesis; cholesterol biosynthesis. Its function is as follows. Catalyzes the reduction of the delta-24 double bond of sterol intermediates during cholesterol biosynthesis. This is Delta(24)-sterol reductase homolog dhcr-24 from Caenorhabditis elegans.